The primary structure comprises 283 residues: Homeobox protein six1a (283 aa).

A DNA-binding region (homeobox) is located at residues 124-183 (GEETSYCFKEKSRSVLREWYTHNPYPSPREKRELAEATGLTTTQVSNWFKNRRQRDRAAE). The disordered stretch occupies residues 168–264 (VSNWFKNRRQ…PLHGMQGHPH (97 aa)). A compositionally biased stretch (basic and acidic residues) spans 179-190 (DRAAEAKERENG). The span at 237 to 248 (MNNPAAPAYPMP) shows a compositional bias: low complexity.

This sequence belongs to the SIX/Sine oculis homeobox family.

Its subcellular location is the nucleus. It is found in the cytoplasm. Transcription factor that is involved in the regulation of cell proliferation, apoptosis and embryonic development. Depending on context, functions as a transcriptional repressor or activator. Plays an important role in the development of the inner ear, where it promotes hair cell proliferation and inhibits proliferation of neural progenitor cells. Required for normal myogenesis. Plays a role in the development of fast muscle fibers throughout the body, as well as the development of craniofacial muscles. This chain is Homeobox protein six1a (six1a), found in Danio rerio (Zebrafish).